The following is a 379-amino-acid chain: Chaperone protein DnaJ (379 aa).

The J domain maps to 5 to 69 (EYYERLGVDK…QKRAAYDQYG (65 aa)). The segment at 141–223 (GVEKQVKYNR…CHGSGHEKVA (83 aa)) adopts a CR-type zinc-finger fold. The Zn(2+) site is built by Cys154, Cys157, Cys171, Cys174, Cys197, Cys200, and Cys214. 4 CXXCXGXG motif repeats span residues 154 to 161 (CHTCGGSG), 171 to 178 (CHKCGGRG), 197 to 204 (CDVCHGTG), and 211 to 218 (STTCHGSG).

It belongs to the DnaJ family. As to quaternary structure, homodimer. Zn(2+) is required as a cofactor.

Its subcellular location is the cytoplasm. Functionally, participates actively in the response to hyperosmotic and heat shock by preventing the aggregation of stress-denatured proteins and by disaggregating proteins, also in an autonomous, DnaK-independent fashion. Unfolded proteins bind initially to DnaJ; upon interaction with the DnaJ-bound protein, DnaK hydrolyzes its bound ATP, resulting in the formation of a stable complex. GrpE releases ADP from DnaK; ATP binding to DnaK triggers the release of the substrate protein, thus completing the reaction cycle. Several rounds of ATP-dependent interactions between DnaJ, DnaK and GrpE are required for fully efficient folding. Also involved, together with DnaK and GrpE, in the DNA replication of plasmids through activation of initiation proteins. The sequence is that of Chaperone protein DnaJ from Lactococcus lactis subsp. cremoris (Streptococcus cremoris).